Consider the following 427-residue polypeptide: Enolase (427 aa).

(2R)-2-phosphoglycerate is bound at residue Q163. E205 functions as the Proton donor in the catalytic mechanism. Mg(2+)-binding residues include D242, E285, and D312. The (2R)-2-phosphoglycerate site is built by K337, R366, S367, and K388. K337 (proton acceptor) is an active-site residue.

The protein belongs to the enolase family. Mg(2+) is required as a cofactor.

It is found in the cytoplasm. The protein localises to the secreted. Its subcellular location is the cell surface. The enzyme catalyses (2R)-2-phosphoglycerate = phosphoenolpyruvate + H2O. Its pathway is carbohydrate degradation; glycolysis; pyruvate from D-glyceraldehyde 3-phosphate: step 4/5. Functionally, catalyzes the reversible conversion of 2-phosphoglycerate (2-PG) into phosphoenolpyruvate (PEP). It is essential for the degradation of carbohydrates via glycolysis. This chain is Enolase, found in Burkholderia vietnamiensis (strain G4 / LMG 22486) (Burkholderia cepacia (strain R1808)).